The chain runs to 458 residues: Phosphoglucosamine mutase (458 aa).

S106 (phosphoserine intermediate) is an active-site residue. Mg(2+) is bound by residues S106, D247, D249, and D251. Residue S106 is modified to Phosphoserine.

The protein belongs to the phosphohexose mutase family. The cofactor is Mg(2+). In terms of processing, activated by phosphorylation.

The catalysed reaction is alpha-D-glucosamine 1-phosphate = D-glucosamine 6-phosphate. Catalyzes the conversion of glucosamine-6-phosphate to glucosamine-1-phosphate. This is Phosphoglucosamine mutase from Chlamydia trachomatis serovar D (strain ATCC VR-885 / DSM 19411 / UW-3/Cx).